Here is a 759-residue protein sequence, read N- to C-terminus: Phosphoribosylformylglycinamidine synthase subunit PurL (759 aa).

Histidine 46 is an active-site residue. Residues tyrosine 49 and lysine 88 each contribute to the ATP site. Glutamate 90 is a binding site for Mg(2+). Residues 91-94 and arginine 113 each bind substrate; that span reads SHNH. The active-site Proton acceptor is the histidine 92. Aspartate 114 is a Mg(2+) binding site. Glutamine 237 is a substrate binding site. Aspartate 265 serves as a coordination point for Mg(2+). 309–311 serves as a coordination point for substrate; sequence ESQ. Aspartate 498 and glycine 535 together coordinate ATP. Residue asparagine 536 coordinates Mg(2+). Serine 538 serves as a coordination point for substrate.

It belongs to the FGAMS family. In terms of assembly, monomer. Part of the FGAM synthase complex composed of 1 PurL, 1 PurQ and 2 PurS subunits.

The protein localises to the cytoplasm. The enzyme catalyses N(2)-formyl-N(1)-(5-phospho-beta-D-ribosyl)glycinamide + L-glutamine + ATP + H2O = 2-formamido-N(1)-(5-O-phospho-beta-D-ribosyl)acetamidine + L-glutamate + ADP + phosphate + H(+). It participates in purine metabolism; IMP biosynthesis via de novo pathway; 5-amino-1-(5-phospho-D-ribosyl)imidazole from N(2)-formyl-N(1)-(5-phospho-D-ribosyl)glycinamide: step 1/2. Its function is as follows. Part of the phosphoribosylformylglycinamidine synthase complex involved in the purines biosynthetic pathway. Catalyzes the ATP-dependent conversion of formylglycinamide ribonucleotide (FGAR) and glutamine to yield formylglycinamidine ribonucleotide (FGAM) and glutamate. The FGAM synthase complex is composed of three subunits. PurQ produces an ammonia molecule by converting glutamine to glutamate. PurL transfers the ammonia molecule to FGAR to form FGAM in an ATP-dependent manner. PurS interacts with PurQ and PurL and is thought to assist in the transfer of the ammonia molecule from PurQ to PurL. This chain is Phosphoribosylformylglycinamidine synthase subunit PurL, found in Anaeromyxobacter dehalogenans (strain 2CP-C).